Consider the following 336-residue polypeptide: Tyrosine recombinase XerC (336 aa).

Residues 14–106 enclose the Core-binding (CB) domain; it reads VANCRWLGEF…SVKSFYRFLL (93 aa). The 204-residue stretch at 127 to 330 folds into the Tyr recombinase domain; it reads KIPDFLSEEE…TFNRLRDAYT (204 aa). Residues Arg183, Lys207, His282, Arg285, and His308 contribute to the active site. Catalysis depends on Tyr317, which acts as the O-(3'-phospho-DNA)-tyrosine intermediate.

It belongs to the 'phage' integrase family. XerC subfamily. Forms a cyclic heterotetrameric complex composed of two molecules of XerC and two molecules of XerD.

It localises to the cytoplasm. In terms of biological role, site-specific tyrosine recombinase, which acts by catalyzing the cutting and rejoining of the recombining DNA molecules. The XerC-XerD complex is essential to convert dimers of the bacterial chromosome into monomers to permit their segregation at cell division. It also contributes to the segregational stability of plasmids. In Chlorobaculum tepidum (strain ATCC 49652 / DSM 12025 / NBRC 103806 / TLS) (Chlorobium tepidum), this protein is Tyrosine recombinase XerC.